The sequence spans 387 residues: Gamma-butyrobetaine dioxygenase (387 aa).

Residues Cys38, Cys40, Cys43, and His82 each contribute to the Zn(2+) site. The Fe cation site is built by His202, Asp204, and His347. Ser351 is modified (phosphoserine).

It belongs to the gamma-BBH/TMLD family. It depends on Fe(2+) as a cofactor. The cofactor is L-ascorbate.

The protein resides in the cytoplasm. The catalysed reaction is 4-(trimethylamino)butanoate + 2-oxoglutarate + O2 = carnitine + succinate + CO2. Its pathway is amine and polyamine biosynthesis; carnitine biosynthesis. In terms of biological role, catalyzes the formation of L-carnitine from gamma-butyrobetaine. The chain is Gamma-butyrobetaine dioxygenase (Bbox1) from Mus musculus (Mouse).